Reading from the N-terminus, the 205-residue chain is Dr1-associated corepressor (205 aa).

Residues 14 to 77 enclose the Histone-fold domain; sequence PARIKKIMQT…SHLKQCIELE (64 aa). The tract at residues 91-205 is disordered; it reads PDMQGDGEDN…EAEDEEDYDS (115 aa). Residues 98–108 are compositionally biased toward basic and acidic residues; that stretch reads EDNHTDGDKGP. Positions 138-155 are enriched in acidic residues; sequence SEQEDESEDTDTDGEEET. The segment covering 172–193 has biased composition (pro residues); the sequence is PPTPFMPFTSPLPLPPAPPGPS. Residues 196–205 are compositionally biased toward acidic residues; the sequence is EAEDEEDYDS.

The protein belongs to the NC2 alpha/DRAP1 family. As to quaternary structure, heterodimer with DR1. Binds BTAF1. Phosphorylation reduces DNA binding, but has no effect on heterodimerization and TBP binding.

It is found in the nucleus. In terms of biological role, the association of the DR1/DRAP1 heterodimer with TBP results in a functional repression of both activated and basal transcription of class II genes. This interaction precludes the formation of a transcription-competent complex by inhibiting the association of TFIIA and/or TFIIB with TBP. Can bind to DNA on its own. This chain is Dr1-associated corepressor, found in Rattus norvegicus (Rat).